The primary structure comprises 505 residues: Lysine--tRNA ligase, heat inducible (505 aa).

N6-acetyllysine occurs at positions 114 and 156. The Mg(2+) site is built by Glu415 and Glu422.

Belongs to the class-II aminoacyl-tRNA synthetase family. As to quaternary structure, homodimer. It depends on Mg(2+) as a cofactor.

It localises to the cytoplasm. It catalyses the reaction tRNA(Lys) + L-lysine + ATP = L-lysyl-tRNA(Lys) + AMP + diphosphate. This is Lysine--tRNA ligase, heat inducible (lysU) from Escherichia coli O6:H1 (strain CFT073 / ATCC 700928 / UPEC).